Reading from the N-terminus, the 236-residue chain is MAAARSCNGYARREGPPSPKLGTEKPRVSAGSGGSGDGWRGERPRSEEDNELSLPSLAAAYTTILRALGEDPERQGLLKTPWRAATAMQFFTKGYQETIADVLNDAIFDEDHDEMVIVKNIDMFSLCEHHLVPFVGKVHIGYLPNKQVLGLSKLARIVEIYSRRLQVQERLTKQIAIAITEALQPAGVGVVIEATHMCMVMRGVQKMNSKTATSTMLGVFREDPKTREEFLTLIRS.

Positions 1-52 (MAAARSCNGYARREGPPSPKLGTEKPRVSAGSGGSGDGWRGERPRSEEDNEL) are disordered. Residues Cys127, His130, and Cys198 each contribute to the Zn(2+) site.

The protein belongs to the GTP cyclohydrolase I family. In terms of assembly, toroid-shaped homodecamer, composed of two pentamers of five dimers.

The protein resides in the cytoplasm. It localises to the nucleus. It catalyses the reaction GTP + H2O = 7,8-dihydroneopterin 3'-triphosphate + formate + H(+). It participates in cofactor biosynthesis; 7,8-dihydroneopterin triphosphate biosynthesis; 7,8-dihydroneopterin triphosphate from GTP: step 1/1. With respect to regulation, GTP shows a positive allosteric effect, and tetrahydrobiopterin inhibits the enzyme activity. Zinc is required for catalytic activity. Inhibited by Mg(2+). In terms of biological role, may positively regulate nitric oxide synthesis in endothelial cells. May be involved in dopamine synthesis. May modify pain sensitivity and persistence. The protein is GTP cyclohydrolase 1 (GCH1) of Gallus gallus (Chicken).